Here is a 445-residue protein sequence, read N- to C-terminus: tRNA modification GTPase MnmE (445 aa).

The (6S)-5-formyl-5,6,7,8-tetrahydrofolate site is built by arginine 25, glutamate 83, and lysine 121. One can recognise a TrmE-type G domain in the interval 217–371; sequence GVRVVILGPP…LLTLIQEKSR (155 aa). GTP-binding positions include 227–232, 246–252, and 271–274; these read NAGKST, SEHPGTT, and DTAG. Positions 231 and 252 each coordinate Mg(2+). Lysine 445 serves as a coordination point for (6S)-5-formyl-5,6,7,8-tetrahydrofolate.

Belongs to the TRAFAC class TrmE-Era-EngA-EngB-Septin-like GTPase superfamily. TrmE GTPase family. In terms of assembly, homodimer. Heterotetramer of two MnmE and two MnmG subunits. Requires K(+) as cofactor.

Its subcellular location is the cytoplasm. Functionally, exhibits a very high intrinsic GTPase hydrolysis rate. Involved in the addition of a carboxymethylaminomethyl (cmnm) group at the wobble position (U34) of certain tRNAs, forming tRNA-cmnm(5)s(2)U34. The chain is tRNA modification GTPase MnmE from Anaplasma phagocytophilum (strain HZ).